Here is a 178-residue protein sequence, read N- to C-terminus: Large ribosomal subunit protein uL6 (178 aa).

It belongs to the universal ribosomal protein uL6 family. As to quaternary structure, part of the 50S ribosomal subunit.

In terms of biological role, this protein binds to the 23S rRNA, and is important in its secondary structure. It is located near the subunit interface in the base of the L7/L12 stalk, and near the tRNA binding site of the peptidyltransferase center. This Corynebacterium kroppenstedtii (strain DSM 44385 / JCM 11950 / CIP 105744 / CCUG 35717) protein is Large ribosomal subunit protein uL6.